Consider the following 349-residue polypeptide: Hydroxymethylglutaryl-CoA synthase (349 aa).

Residues D30 and A31 each coordinate (3S)-3-hydroxy-3-methylglutaryl-CoA. E82 serves as the catalytic Proton donor/acceptor. Residues C114 and T155 each contribute to the (3S)-3-hydroxy-3-methylglutaryl-CoA site. C114 functions as the Acyl-thioester intermediate in the catalytic mechanism. R203 contacts CoA. (3S)-3-hydroxy-3-methylglutaryl-CoA-binding residues include T205 and H238. The active-site Proton donor/acceptor is H238. K243 contributes to the CoA binding site. (3S)-3-hydroxy-3-methylglutaryl-CoA is bound by residues N270 and S300.

It belongs to the thiolase-like superfamily. Archaeal HMG-CoA synthase family. As to quaternary structure, interacts with acetoacetyl-CoA thiolase that catalyzes the precedent step in the pathway and with a DUF35 protein. The acetoacetyl-CoA thiolase/HMG-CoA synthase complex channels the intermediate via a fused CoA-binding site, which allows for efficient coupling of the endergonic thiolase reaction with the exergonic HMGCS reaction.

It carries out the reaction acetoacetyl-CoA + acetyl-CoA + H2O = (3S)-3-hydroxy-3-methylglutaryl-CoA + CoA + H(+). It participates in metabolic intermediate biosynthesis; (R)-mevalonate biosynthesis; (R)-mevalonate from acetyl-CoA: step 2/3. Catalyzes the condensation of acetyl-CoA with acetoacetyl-CoA to form 3-hydroxy-3-methylglutaryl-CoA (HMG-CoA). Functions in the mevalonate (MVA) pathway leading to isopentenyl diphosphate (IPP), a key precursor for the biosynthesis of isoprenoid compounds that are building blocks of archaeal membrane lipids. The chain is Hydroxymethylglutaryl-CoA synthase from Methanococcus maripaludis (strain DSM 14266 / JCM 13030 / NBRC 101832 / S2 / LL).